A 476-amino-acid chain; its full sequence is MKPILPDYSQSGVLVVGDVMLDRYWYGPTGRISPEAPVPVVKVENNEERPGGAANVAMNIASLGGHAHIVGLTGKDEPAEVLKNTLGALKVKCDFVELDDYPTITKLRVMSRGQQLIRLDFEDKFENTDPELVLSRMEQALPNVRSVILSDYAKGALEHVQSFIQKARAANVPVFIDPKGADFERYRGATLLTPNMAEFELVAGKVKSEDEMIEKGLALIEEFDFEALLVTRSEHGMTLLRKGVEPFHLPTQAKEVYDVTGAGDTVISVLAASVAAGKPLDEACALANAAAGVVVGKLGTSTLSTIELAEAIHGSQDTDYGVISEAALVEAVKRARAKGEKVVMTNGCFDILHAGHVSYMNHAAELGDRLIVAVNTDESVKRLKGPGRPVNPTDRRMAVLAGLGAVDWVVPFSEDTPQRLISEVLPSILVKGGDYKPEEIAGGAEVIAAGGEVKVLNFEDGCSTTEIIKAIKGGRG.

Residues 1 to 318 (MKPILPDYSQ…AEAIHGSQDT (318 aa)) are ribokinase. 195–198 (NMAE) is an ATP binding site. Residue Asp-264 is part of the active site. Residues 344–476 (MTNGCFDILH…IIKAIKGGRG (133 aa)) form a cytidylyltransferase region.

It in the N-terminal section; belongs to the carbohydrate kinase PfkB family. In the C-terminal section; belongs to the cytidylyltransferase family. In terms of assembly, homodimer.

It carries out the reaction D-glycero-beta-D-manno-heptose 7-phosphate + ATP = D-glycero-beta-D-manno-heptose 1,7-bisphosphate + ADP + H(+). It catalyses the reaction D-glycero-beta-D-manno-heptose 1-phosphate + ATP + H(+) = ADP-D-glycero-beta-D-manno-heptose + diphosphate. It participates in nucleotide-sugar biosynthesis; ADP-L-glycero-beta-D-manno-heptose biosynthesis; ADP-L-glycero-beta-D-manno-heptose from D-glycero-beta-D-manno-heptose 7-phosphate: step 1/4. The protein operates within nucleotide-sugar biosynthesis; ADP-L-glycero-beta-D-manno-heptose biosynthesis; ADP-L-glycero-beta-D-manno-heptose from D-glycero-beta-D-manno-heptose 7-phosphate: step 3/4. Functionally, catalyzes the phosphorylation of D-glycero-D-manno-heptose 7-phosphate at the C-1 position to selectively form D-glycero-beta-D-manno-heptose-1,7-bisphosphate. Catalyzes the ADP transfer from ATP to D-glycero-beta-D-manno-heptose 1-phosphate, yielding ADP-D-glycero-beta-D-manno-heptose. The sequence is that of Bifunctional protein HldE from Vibrio atlanticus (strain LGP32) (Vibrio splendidus (strain Mel32)).